A 170-amino-acid polypeptide reads, in one-letter code: Adenine phosphoribosyltransferase (170 aa).

This sequence belongs to the purine/pyrimidine phosphoribosyltransferase family. As to quaternary structure, homodimer.

It is found in the cytoplasm. The catalysed reaction is AMP + diphosphate = 5-phospho-alpha-D-ribose 1-diphosphate + adenine. The protein operates within purine metabolism; AMP biosynthesis via salvage pathway; AMP from adenine: step 1/1. Its function is as follows. Catalyzes a salvage reaction resulting in the formation of AMP, that is energically less costly than de novo synthesis. This Halothermothrix orenii (strain H 168 / OCM 544 / DSM 9562) protein is Adenine phosphoribosyltransferase.